Reading from the N-terminus, the 44-residue chain is Defensin heliomicin (44 aa).

3 cysteine pairs are disulfide-bonded: C7–C32, C18–C40, and C22–C42.

The protein localises to the secreted. This peptide has potent anti-fungal activity. Has no activity against Gram-negative and Gram-positive bacteria. This Heliothis virescens (Tobacco budworm moth) protein is Defensin heliomicin.